A 465-amino-acid polypeptide reads, in one-letter code: Methylenetetrahydrofolate--tRNA-(uracil-5-)-methyltransferase TrmFO (465 aa).

10–15 (GAGLAG) contacts FAD.

The protein belongs to the MnmG family. TrmFO subfamily. Requires FAD as cofactor.

It is found in the cytoplasm. The catalysed reaction is uridine(54) in tRNA + (6R)-5,10-methylene-5,6,7,8-tetrahydrofolate + NADH + H(+) = 5-methyluridine(54) in tRNA + (6S)-5,6,7,8-tetrahydrofolate + NAD(+). It carries out the reaction uridine(54) in tRNA + (6R)-5,10-methylene-5,6,7,8-tetrahydrofolate + NADPH + H(+) = 5-methyluridine(54) in tRNA + (6S)-5,6,7,8-tetrahydrofolate + NADP(+). Catalyzes the folate-dependent formation of 5-methyl-uridine at position 54 (M-5-U54) in all tRNAs. The polypeptide is Methylenetetrahydrofolate--tRNA-(uracil-5-)-methyltransferase TrmFO (Deinococcus radiodurans (strain ATCC 13939 / DSM 20539 / JCM 16871 / CCUG 27074 / LMG 4051 / NBRC 15346 / NCIMB 9279 / VKM B-1422 / R1)).